The chain runs to 462 residues: NEDD8-activating enzyme E1 catalytic subunit (462 aa).

At Ala-2 the chain carries N-acetylalanine. Residues 53–70 are interaction with UBE2M N-terminus; the sequence is HPDFEPSTESLQFLLDTC. ATP-binding positions include 100–124 and 148–171; these read DMDTIDVSNLNRQFLFRPKDVGRPK and IQDFNDTFYRQFHIIVCGLDSIIA. 2 interaction with UBE2M N-terminus regions span residues 157 to 161 and 192 to 217; these read RQFHI and PSSIVPLIDGGTEGFKGNARVILPGM. Residues 227–229 form an interaction with NEDD8 region; sequence LYP. The Glycyl thioester intermediate role is filled by Cys-237. 2 interaction with NAE1 regions span residues 242-248 and 292-295; these read MPRLPEH and YNIR. Positions 331–338 are interaction with UBE2M N-terminus; the sequence is IATSAYIP. An interaction with NEDD8 region spans residues 352-357; the sequence is YTYTFE. The interaction with UBE2M core domain stretch occupies residues 368–462; it reads SQLPQNIQFS…QTVLFKLHFT (95 aa).

The protein belongs to the ubiquitin-activating E1 family. UBA3 subfamily. Heterodimer of UBA3 and NAE1. Interacts with NEDD8, UBE2F and UBE2M. Binds ESR1 and ESR2 with bound steroid ligand. Interacts with TBATA.

It catalyses the reaction ATP + [NEDD8 protein] + [E1 NEDD8-activating enzyme]-L-cysteine = AMP + diphosphate + [E1 NEDD8-activating enzyme]-S-[NEDD8 protein]-yl-L-cysteine.. It participates in protein modification; protein neddylation. Binding of TP53BP2 to the regulatory subunit NAE1 decreases activity. Catalytic subunit of the dimeric UBA3-NAE1 E1 enzyme. E1 activates NEDD8 by first adenylating its C-terminal glycine residue with ATP, thereafter linking this residue to the side chain of the catalytic cysteine, yielding a NEDD8-UBA3 thioester and free AMP. E1 finally transfers NEDD8 to the catalytic cysteine of UBE2M. Down-regulates steroid receptor activity. Necessary for cell cycle progression. This chain is NEDD8-activating enzyme E1 catalytic subunit (Uba3), found in Mus musculus (Mouse).